The following is a 418-amino-acid chain: UDP-N-acetylglucosamine 1-carboxyvinyltransferase (418 aa).

23–24 lines the phosphoenolpyruvate pocket; that stretch reads KN. UDP-N-acetyl-alpha-D-glucosamine is bound at residue R92. C116 acts as the Proton donor in catalysis. 2-(S-cysteinyl)pyruvic acid O-phosphothioketal is present on C116. UDP-N-acetyl-alpha-D-glucosamine contacts are provided by residues 121-125, 161-164, D306, and I328; these read RPVDL and KVSV.

It belongs to the EPSP synthase family. MurA subfamily.

The protein resides in the cytoplasm. It carries out the reaction phosphoenolpyruvate + UDP-N-acetyl-alpha-D-glucosamine = UDP-N-acetyl-3-O-(1-carboxyvinyl)-alpha-D-glucosamine + phosphate. It participates in cell wall biogenesis; peptidoglycan biosynthesis. Functionally, cell wall formation. Adds enolpyruvyl to UDP-N-acetylglucosamine. This is UDP-N-acetylglucosamine 1-carboxyvinyltransferase from Vibrio parahaemolyticus serotype O3:K6 (strain RIMD 2210633).